A 521-amino-acid polypeptide reads, in one-letter code: Insulinoma-associated protein 1 (521 aa).

The segment covering 1-12 has biased composition (basic residues); the sequence is MPRGFLVKRSKK. Residues 1-20 form an SNAG domain region; the sequence is MPRGFLVKRSKKSTPVSYRV. 3 disordered regions span residues 1–59, 76–107, and 180–230; these read MPRG…PPAL, GPPP…PTRP, and AEAA…KPKA. The required and sufficient for interaction with KDM1A stretch occupies residues 2–7; it reads PRGFLV. Positions 43-56 are necessary for interaction with CCND1; it reads PPVPSPGPLPPPPP. Pro residues-rich tracts occupy residues 43–58 and 76–85; these read PPVP…PPPA and GPPPPPPPGP. The segment covering 209–223 has biased composition (low complexity); sequence AAVATEPPAKAAKAP. The C2H2-type 1; atypical zinc-finger motif lies at 272–292; the sequence is FICQLCKEEYADPFALAQHKC. The C2H2-type 2 zinc finger occupies 300 to 322; sequence YRCPECAKVFSCPANLASHRRWH. Positions 320-369 are disordered; sequence RWHKPRPVPAAARAPEPEAATRAEAREAAGGGSSDRDTPSPGGVSESGSE. Over residues 334–346 the composition is skewed to basic and acidic residues; it reads PEPEAATRAEARE. The C2H2-type 3 zinc-finger motif lies at 373 to 395; the sequence is YECHHCAKKFRRQAYLRKHLLAH. Residues 398 to 419 are disordered; it reads ALQAKGAPPPPPPPPPPAEDIL. Positions 404–415 are enriched in pro residues; it reads APPPPPPPPPPA. 2 consecutive C2H2-type zinc fingers follow at residues 452 to 475 and 480 to 503; these read HLCP…RLLH and FPCK…NKCH.

It belongs to the INSM1 family. In terms of assembly, interacts (via the N-terminal region) with CCND1 (via cyclin N-terminal domain); the interaction competes with the binding of CCND1 to CDK4 during cell cycle progression and increases its transcriptional repressor activity. Interacts with HDAC3; the interaction increases its transcriptional repressor activity. Interacts (via the SNAG domain) with HDAC1. Interacts (via the SNAG domain) with HDAC2. Interacts (via the SNAG domain) with KDM1A. Interacts (via the SNAG domain) with RCOR1. Interacts with SORBS1. In terms of tissue distribution, expressed in adrenal gland. Expressed in the dentate gyrus of the hippocampus and the wall of the lateral ventricle. Expressed in pancreatic and intestinal endocrine cells.

It is found in the nucleus. Functionally, sequence-specific DNA-binding transcriptional regulator that plays a key role in neurogenesis and neuroendocrine cell differentiation during embryonic and/or fetal development. Binds to the consensus sequence 5'-[TG][TC][TC][TT][GA]GGG[CG]A-3' in target promoters. Acts as a transcriptional repressor of NEUROD1 and INS expression via its interaction with cyclin CCND1 in a cell cycle-independent manner. Negatively regulates skeletal muscle-specific gene expression in endocrine cells of the pituitary by inhibiting the Notch signaling pathway. Represses target gene transcription by recruiting chromatin-modifying factors, such as HDAC1, HDAC2, HDAC3, KDM1A and RCOR1 histone deacetylases. Binds to its own promoter, suggesting autoregulation as a self-control feedback mechanism. Competes with histone H3 for the same binding site on the histone demethylase complex formed by KDM1A and RCOR1, and thereby inhibits demethylation of histone H3 at 'Lys-4'. Promotes the generation and expansion of neuronal basal progenitor cells in the developing neocortex. Involved in the differentiation of endocrine cells of the developing anterior pituitary gland, of the pancreas and intestine, and of sympatho-adrenal cells in the peripheral nervous system. Promotes cell cycle signaling arrest and inhibition of cellular proliferation. This is Insulinoma-associated protein 1 (Insm1) from Mus musculus (Mouse).